Consider the following 284-residue polypeptide: Tropomyosin (284 aa).

Residues 1–284 adopt a coiled-coil conformation; the sequence is MDGIKKKMIA…DQTFAELTGY (284 aa). Residues 111 to 131 form a disordered region; sequence TKLEEASKTAEESERGRKDLE.

The protein belongs to the tropomyosin family. Homodimer.

Its function is as follows. Tropomyosin, in association with the troponin complex, plays a central role in the calcium dependent regulation of muscle contraction. The chain is Tropomyosin from Schistosoma japonicum (Blood fluke).